The following is a 343-amino-acid chain: L-rhamnose-proton symporter (343 aa).

Helical transmembrane passes span 4–24, 38–58, 68–88, 101–121, 137–157, 175–195, 207–227, 254–274, 289–309, and 320–340; these read AIIL…CFYA, WSIG…YLLL, FSIA…IGNI, MGIG…TPIL, TLLG…AGLL, LILA…MDAA, INSL…GAII, LLIT…LQFF, MSWM…GLLL, and VAVL…VGLG.

The protein belongs to the L-rhamnose transporter (TC 2.A.7.6) family.

It localises to the cell inner membrane. The enzyme catalyses L-rhamnopyranose(in) + H(+)(in) = L-rhamnopyranose(out) + H(+)(out). Functionally, uptake of L-rhamnose across the cytoplasmic membrane with the concomitant transport of protons into the cell (symport system). The polypeptide is L-rhamnose-proton symporter (Yersinia pestis bv. Antiqua (strain Antiqua)).